A 586-amino-acid chain; its full sequence is Asparagine synthetase, nodule [glutamine-hydrolyzing] (586 aa).

Residue cysteine 2 is the For GATase activity of the active site. One can recognise a Glutamine amidotransferase type-2 domain in the interval 2–185; that stretch reads CGILAVLGCS…PGHLYSSKER (184 aa). L-glutamine-binding positions include 50–54, 75–77, and aspartate 98; these read RLAIV and NGE. The Asparagine synthetase domain maps to 193–517; sequence PPWFNEAIIP…PQNSARLTVP (325 aa). ATP-binding positions include leucine 232, valine 268, and 342-343; that span reads SG.

In terms of tissue distribution, root nodules.

It catalyses the reaction L-aspartate + L-glutamine + ATP + H2O = L-asparagine + L-glutamate + AMP + diphosphate + H(+). It functions in the pathway amino-acid biosynthesis; L-asparagine biosynthesis; L-asparagine from L-aspartate (L-Gln route): step 1/1. The polypeptide is Asparagine synthetase, nodule [glutamine-hydrolyzing] (AS1) (Pisum sativum (Garden pea)).